The primary structure comprises 717 residues: Fatty acid oxidation complex subunit alpha (717 aa).

Positions 1-190 (MIHAGNAITV…KDGAVDAVVS (190 aa)) are enoyl-CoA hydratase/isomerase. Aspartate 298 provides a ligand contact to substrate. Residues 313–717 (HPVNQAAVLG…MAENNKKFYG (405 aa)) are 3-hydroxyacyl-CoA dehydrogenase. Residues methionine 326, aspartate 345, 402–404 (VTE), lysine 409, and serine 431 each bind NAD(+). Histidine 452 functions as the For 3-hydroxyacyl-CoA dehydrogenase activity in the catalytic mechanism. Asparagine 455 provides a ligand contact to NAD(+). Asparagine 502 provides a ligand contact to substrate.

This sequence in the N-terminal section; belongs to the enoyl-CoA hydratase/isomerase family. The protein in the C-terminal section; belongs to the 3-hydroxyacyl-CoA dehydrogenase family. Heterotetramer of two alpha chains (FadB) and two beta chains (FadA).

The enzyme catalyses a (3S)-3-hydroxyacyl-CoA + NAD(+) = a 3-oxoacyl-CoA + NADH + H(+). It carries out the reaction a (3S)-3-hydroxyacyl-CoA = a (2E)-enoyl-CoA + H2O. It catalyses the reaction a 4-saturated-(3S)-3-hydroxyacyl-CoA = a (3E)-enoyl-CoA + H2O. The catalysed reaction is (3S)-3-hydroxybutanoyl-CoA = (3R)-3-hydroxybutanoyl-CoA. The enzyme catalyses a (3Z)-enoyl-CoA = a 4-saturated (2E)-enoyl-CoA. It carries out the reaction a (3E)-enoyl-CoA = a 4-saturated (2E)-enoyl-CoA. Its pathway is lipid metabolism; fatty acid beta-oxidation. Involved in the aerobic and anaerobic degradation of long-chain fatty acids via beta-oxidation cycle. Catalyzes the formation of 3-oxoacyl-CoA from enoyl-CoA via L-3-hydroxyacyl-CoA. It can also use D-3-hydroxyacyl-CoA and cis-3-enoyl-CoA as substrate. The protein is Fatty acid oxidation complex subunit alpha of Acinetobacter baylyi (strain ATCC 33305 / BD413 / ADP1).